Consider the following 274-residue polypeptide: Phosphoribosylaminoimidazole-succinocarboxamide synthase (274 aa).

Belongs to the SAICAR synthetase family.

The catalysed reaction is 5-amino-1-(5-phospho-D-ribosyl)imidazole-4-carboxylate + L-aspartate + ATP = (2S)-2-[5-amino-1-(5-phospho-beta-D-ribosyl)imidazole-4-carboxamido]succinate + ADP + phosphate + 2 H(+). It functions in the pathway purine metabolism; IMP biosynthesis via de novo pathway; 5-amino-1-(5-phospho-D-ribosyl)imidazole-4-carboxamide from 5-amino-1-(5-phospho-D-ribosyl)imidazole-4-carboxylate: step 1/2. This is Phosphoribosylaminoimidazole-succinocarboxamide synthase from Nitrosopumilus maritimus (strain SCM1).